A 693-amino-acid chain; its full sequence is Homoaconitase, mitochondrial (693 aa).

Residues 1 to 17 (MFRVQRLRMFSTSRALY) constitute a mitochondrion transit peptide. Positions 338, 405, and 408 each coordinate [4Fe-4S] cluster.

The protein belongs to the aconitase/IPM isomerase family. The cofactor is [4Fe-4S] cluster.

The protein localises to the mitochondrion. The enzyme catalyses (2R,3S)-homoisocitrate = cis-homoaconitate + H2O. It participates in amino-acid biosynthesis; L-lysine biosynthesis via AAA pathway; L-alpha-aminoadipate from 2-oxoglutarate: step 3/5. Functionally, catalyzes the reversible hydration of cis-homoaconitate to (2R,3S)-homoisocitrate, a step in the alpha-aminoadipate pathway for lysine biosynthesis. The chain is Homoaconitase, mitochondrial (LYS4) from Kluyveromyces lactis (strain ATCC 8585 / CBS 2359 / DSM 70799 / NBRC 1267 / NRRL Y-1140 / WM37) (Yeast).